We begin with the raw amino-acid sequence, 664 residues long: MTLYAKWEINVYTVSFATNGGSKVSEVDAEFASLIEEPTPPEKEGHSFKGWYQDELLTEAWDFEVETITENITLYAKWEINVYTVSFESNGGSQVSEVEAEYGSSITEPVPPEKEGHSFLGWYQDELLTEAWDFETSTVSEDMILYAKWEINEYTVSFELNGGSHVSEVEAEYGSTITEPAPPEKEGHSFLGWYQDELHTEAWDFETDVISENMTLYAQWSINNYDVHYDGNDYDSGEAPLTEAFAYDSEVTVAGQHTLGRNGYTFIGWNTERDGSGDQFEPGDTYRMGSEPLTLYAQWASNNAKLSELVISHGTLTPIFEADYAHYAVEVGHQVTSITITPTLQDTRSTVSISQNEAASGEVSSAIPLEEGLNTIIIDITAEDGSTYAYTVDVMRKVTDQFAQLTRESHFVTLDDEQIHMLDEEGTLRVDLQGELDDVTEVKFTQYQVQLLQEKGAFVQVVKEDLLVYIPFINFEPVKDLNITIQRQDYNIDTFAFADRSASAIYQLNIDQNGERISVFEHDIQLSFPVKNIGETNLEELQVYYFNPDGQEWELIGGTYNNGYIHATTSHFSTFAVFHPDHLSVEDDVTQDENGEEKSEEDNKEEIVEENTEEDNKEEKTIEAGEELPLTATRTYQFLLAGIIMLVGGSCIYVFYRRRNIMKT.

A compositionally biased stretch (acidic residues) spans 588 to 616 (DVTQDENGEEKSEEDNKEEIVEENTEEDN). Residues 588–622 (DVTQDENGEEKSEEDNKEEIVEENTEEDNKEEKTI) are disordered. A helical transmembrane segment spans residues 636–656 (YQFLLAGIIMLVGGSCIYVFY).

Its subcellular location is the cell membrane. This chain is Putative membrane protein Bcell_0381, found in Evansella cellulosilytica (strain ATCC 21833 / DSM 2522 / FERM P-1141 / JCM 9156 / N-4) (Bacillus cellulosilyticus).